A 236-amino-acid polypeptide reads, in one-letter code: 2-C-methyl-D-erythritol 4-phosphate cytidylyltransferase (236 aa).

It belongs to the IspD/TarI cytidylyltransferase family. IspD subfamily. Homodimer.

It catalyses the reaction 2-C-methyl-D-erythritol 4-phosphate + CTP + H(+) = 4-CDP-2-C-methyl-D-erythritol + diphosphate. The protein operates within isoprenoid biosynthesis; isopentenyl diphosphate biosynthesis via DXP pathway; isopentenyl diphosphate from 1-deoxy-D-xylulose 5-phosphate: step 2/6. Its function is as follows. Catalyzes the formation of 4-diphosphocytidyl-2-C-methyl-D-erythritol from CTP and 2-C-methyl-D-erythritol 4-phosphate (MEP). The polypeptide is 2-C-methyl-D-erythritol 4-phosphate cytidylyltransferase (Salmonella agona (strain SL483)).